Reading from the N-terminus, the 234-residue chain is Aspartate/glutamate leucyltransferase (234 aa).

It belongs to the R-transferase family. Bpt subfamily.

It localises to the cytoplasm. The enzyme catalyses N-terminal L-glutamyl-[protein] + L-leucyl-tRNA(Leu) = N-terminal L-leucyl-L-glutamyl-[protein] + tRNA(Leu) + H(+). It catalyses the reaction N-terminal L-aspartyl-[protein] + L-leucyl-tRNA(Leu) = N-terminal L-leucyl-L-aspartyl-[protein] + tRNA(Leu) + H(+). In terms of biological role, functions in the N-end rule pathway of protein degradation where it conjugates Leu from its aminoacyl-tRNA to the N-termini of proteins containing an N-terminal aspartate or glutamate. The protein is Aspartate/glutamate leucyltransferase of Hahella chejuensis (strain KCTC 2396).